A 382-amino-acid polypeptide reads, in one-letter code: Sphingoid long-chain base transporter RSB1 (382 aa).

Topologically, residues 1 to 34 are extracellular; the sequence is MSNATNNTLGSLLPQLEAAANSNSLYGGMVPNLR. 2 N-linked (GlcNAc...) asparagine glycosylation sites follow: asparagine 3 and asparagine 6. Residues 35-55 form a helical membrane-spanning segment; it reads FNITMIVIWGILLTIHVVQLL. At 56–57 the chain is on the cytoplasmic side; the sequence is MR. A helical transmembrane segment spans residues 58-78; the sequence is QYWFSIAFICTGILEVLGFIG. At 79-90 the chain is on the extracellular side; it reads RTWSHSNVADMD. The chain crosses the membrane as a helical span at residues 91–111; the sequence is AFLLNMICLTIAPVFTMGGIY. Residues 112–135 lie on the Cytoplasmic side of the membrane; it reads YQLAKLIEVYGHRFSLLPSPMAYS. The helical transmembrane segment at 136–156 threads the bilayer; the sequence is FIFICSDIVSLVVQAVGGGLC. At 157–171 the chain is on the extracellular side; sequence GVAVTDGTSTTTGNH. Residues 172 to 192 traverse the membrane as a helical segment; the sequence is VFIAGLAIQVASMAIFLMLWF. Topologically, residues 193–241 are cytoplasmic; the sequence is HFLFRIYISVRWEHINSRPISLSLLKISQTEVDYLYREKFHFLRLEPKR. Residues 242-262 form a helical membrane-spanning segment; that stretch reads WVFHYFNLAMTVAVLTIFTRC. Residues 263 to 281 lie on the Extracellular side of the membrane; sequence CYRLAELVVGWDGYLITHE. The chain crosses the membrane as a helical span at residues 282–302; the sequence is WYFIILDALMMAIATVTLTIF. The Cytoplasmic segment spans residues 303–382; the sequence is HPGFAFKGRS…LFSSKKKAKL (80 aa).

Belongs to the lipid-translocating exporter (LTE) (TC 9.A.26.1) family.

Its subcellular location is the cell membrane. In terms of biological role, catalyzes the ATP-dependent translocation of sphingoid long-chain bases (LCBs) from the cytoplasmic site toward the extracytoplasmic side of the membrane (flip-flop). Involved in the establishment of the functional lipid asymmetry of the plasma membrane. Regulates intracellular levels of LCBs, sphingolipid precursors that are growth inhibitory at increased levels. The polypeptide is Sphingoid long-chain base transporter RSB1 (RSB1) (Saccharomyces cerevisiae (strain AWRI1631) (Baker's yeast)).